A 57-amino-acid polypeptide reads, in one-letter code: Potassium channel toxin MeuTXKalpha2 (57 aa).

The N-terminal stretch at 1-19 is a signal peptide; the sequence is MSRLYAIILIALVFNVIMT. A propeptide spanning residues 20-28 is cleaved from the precursor; the sequence is IMPDMKVEA. Cystine bridges form between cysteine 31–cysteine 47, cysteine 34–cysteine 52, and cysteine 38–cysteine 54.

The protein belongs to the short scorpion toxin superfamily. Potassium channel inhibitor family. Alpha-KTx 08 subfamily. Expressed by the venom gland.

Its subcellular location is the secreted. Its function is as follows. Inhibits Kv1.1/KCNA1, Kv1.3/KCNA3 and Shaker potassium channels. The protein is Potassium channel toxin MeuTXKalpha2 of Mesobuthus eupeus (Lesser Asian scorpion).